The primary structure comprises 298 residues: NAD kinase (298 aa).

The active-site Proton acceptor is the Asp-80. NAD(+) contacts are provided by residues 80 to 81, 154 to 155, Arg-182, Asp-184, 195 to 200, Ala-219, and Gln-253; these read DG, ND, and TAYALS.

Belongs to the NAD kinase family. Requires a divalent metal cation as cofactor.

It localises to the cytoplasm. It catalyses the reaction NAD(+) + ATP = ADP + NADP(+) + H(+). In terms of biological role, involved in the regulation of the intracellular balance of NAD and NADP, and is a key enzyme in the biosynthesis of NADP. Catalyzes specifically the phosphorylation on 2'-hydroxyl of the adenosine moiety of NAD to yield NADP. The sequence is that of NAD kinase from Delftia acidovorans (strain DSM 14801 / SPH-1).